The primary structure comprises 175 residues: Ribosome maturation factor RimM (175 aa).

The region spanning 96–172 (PDTYYDHQLE…LIEIDPPDGL (77 aa)) is the PRC barrel domain.

This sequence belongs to the RimM family. In terms of assembly, binds ribosomal protein uS19.

It is found in the cytoplasm. In terms of biological role, an accessory protein needed during the final step in the assembly of 30S ribosomal subunit, possibly for assembly of the head region. Essential for efficient processing of 16S rRNA. May be needed both before and after RbfA during the maturation of 16S rRNA. It has affinity for free ribosomal 30S subunits but not for 70S ribosomes. The sequence is that of Ribosome maturation factor RimM from Mycolicibacterium paratuberculosis (strain ATCC BAA-968 / K-10) (Mycobacterium paratuberculosis).